A 707-amino-acid polypeptide reads, in one-letter code: UvrABC system protein C (707 aa).

The region spanning 14-94 (AEPGCYLMKD…IKKHRPRFNV (81 aa)) is the GIY-YIG domain. In terms of domain architecture, UVR spans 206 to 241 (GELVERLRGRMAGAAEGLRFEEAARLRDQLQAVERS). The interval 655 to 707 (DAPPIAADEPSGAPAGAPGGGPAEASPEAVAAATEAEIDAALADEDASPEPAA) is disordered. Composition is skewed to low complexity over residues 660–670 (AADEPSGAPAG) and 677–689 (AEAS…AATE). Positions 690 to 707 (AEIDAALADEDASPEPAA) are enriched in acidic residues.

It belongs to the UvrC family. In terms of assembly, interacts with UvrB in an incision complex.

It is found in the cytoplasm. Functionally, the UvrABC repair system catalyzes the recognition and processing of DNA lesions. UvrC both incises the 5' and 3' sides of the lesion. The N-terminal half is responsible for the 3' incision and the C-terminal half is responsible for the 5' incision. In Anaeromyxobacter dehalogenans (strain 2CP-1 / ATCC BAA-258), this protein is UvrABC system protein C.